We begin with the raw amino-acid sequence, 282 residues long: Formamidopyrimidine-DNA glycosylase (282 aa).

Pro2 (schiff-base intermediate with DNA) is an active-site residue. The Proton donor role is filled by Glu3. Lys60 functions as the Proton donor; for beta-elimination activity in the catalytic mechanism. Residues His99, Arg118, and Lys163 each coordinate DNA. An FPG-type zinc finger spans residues 248-282; that stretch reads LVYRRSGKNCKKCGEKILREKICGRSTHWCPNCQK. The active-site Proton donor; for delta-elimination activity is Arg272.

It belongs to the FPG family. As to quaternary structure, monomer. The cofactor is Zn(2+).

It catalyses the reaction Hydrolysis of DNA containing ring-opened 7-methylguanine residues, releasing 2,6-diamino-4-hydroxy-5-(N-methyl)formamidopyrimidine.. It carries out the reaction 2'-deoxyribonucleotide-(2'-deoxyribose 5'-phosphate)-2'-deoxyribonucleotide-DNA = a 3'-end 2'-deoxyribonucleotide-(2,3-dehydro-2,3-deoxyribose 5'-phosphate)-DNA + a 5'-end 5'-phospho-2'-deoxyribonucleoside-DNA + H(+). In terms of biological role, involved in base excision repair of DNA damaged by oxidation or by mutagenic agents. Acts as a DNA glycosylase that recognizes and removes damaged bases. Has a preference for oxidized purines, such as 7,8-dihydro-8-oxoguanine (8-oxoG). Has AP (apurinic/apyrimidinic) lyase activity and introduces nicks in the DNA strand. Cleaves the DNA backbone by beta-delta elimination to generate a single-strand break at the site of the removed base with both 3'- and 5'-phosphates. The protein is Formamidopyrimidine-DNA glycosylase of Prochlorococcus marinus (strain NATL1A).